We begin with the raw amino-acid sequence, 392 residues long: Adenine nucleotide transporter BT1, chloroplastic/mitochondrial (392 aa).

Solcar repeat units lie at residues 108 to 191 (NPSL…VNKK), 202 to 286 (IPIP…LRKA), and 296 to 384 (IGNI…CKKI). 6 helical membrane passes run 113-133 (RLLSGAVAGAVSRTVVAPLET), 168-188 (LVNVIRVAPARAVELFVFETV), 204-224 (IPASLLAGACAGVSQTLLTYP), 263-283 (APSLIGVVPYAATNYFAYDSL), 302-322 (LLIGSLAGALSSTATFPLEVA), and 359-379 (GLGPSCLKLVPAAGISFMCYE).

It belongs to the mitochondrial carrier (TC 2.A.29) family. Expressed in root tips, the central cylinder of young roots, and maturating and germinating pollen.

It is found in the plastid. Its subcellular location is the chloroplast inner membrane. The protein resides in the mitochondrion inner membrane. With respect to regulation, inhibited by pyridoxal 5-phosphate but not mersalyl. Its function is as follows. Probable mitochondrial adenylate carrier that catalyzes the transport of ATP, ADP and AMP, but not ADP-glucose. Recombinant BT1 shows a unidirectional mode of transport in intact E.coli cells. May function as a plastidial nucleotide uniport carrier required to export newly synthesized adenylates into the cytosol. May be involved in abiotic stress response. The protein is Adenine nucleotide transporter BT1, chloroplastic/mitochondrial (BT1) of Arabidopsis thaliana (Mouse-ear cress).